The following is a 70-amino-acid chain: ATP synthase subunit c (70 aa).

The next 2 helical transmembrane spans lie at 4–24 (IAAGIAAGLAAVGAGVGNGLV) and 47–67 (FLGVGLIEALPILSIVIAFLV).

It belongs to the ATPase C chain family. In terms of assembly, F-type ATPases have 2 components, F(1) - the catalytic core - and F(0) - the membrane proton channel. F(1) has five subunits: alpha(3), beta(3), gamma(1), delta(1), epsilon(1). F(0) has three main subunits: a(1), b(2) and c(10-14). The alpha and beta chains form an alternating ring which encloses part of the gamma chain. F(1) is attached to F(0) by a central stalk formed by the gamma and epsilon chains, while a peripheral stalk is formed by the delta and b chains.

It is found in the cell membrane. Its function is as follows. F(1)F(0) ATP synthase produces ATP from ADP in the presence of a proton or sodium gradient. F-type ATPases consist of two structural domains, F(1) containing the extramembraneous catalytic core and F(0) containing the membrane proton channel, linked together by a central stalk and a peripheral stalk. During catalysis, ATP synthesis in the catalytic domain of F(1) is coupled via a rotary mechanism of the central stalk subunits to proton translocation. In terms of biological role, key component of the F(0) channel; it plays a direct role in translocation across the membrane. A homomeric c-ring of between 10-14 subunits forms the central stalk rotor element with the F(1) delta and epsilon subunits. This Limosilactobacillus fermentum (strain NBRC 3956 / LMG 18251) (Lactobacillus fermentum) protein is ATP synthase subunit c.